A 346-amino-acid chain; its full sequence is uncharacterized protein (346 aa).

This is an uncharacterized protein from Mycoplasma pneumoniae (strain ATCC 29342 / M129 / Subtype 1) (Mycoplasmoides pneumoniae).